The primary structure comprises 303 residues: Probable cell division protein WhiA (303 aa).

The H-T-H motif DNA-binding region spans 272 to 303; sequence SIQQLADSLSTPLTKSGVNHRLRKINKIADEL.

The protein belongs to the WhiA family.

Involved in cell division and chromosome segregation. This Streptococcus pneumoniae serotype 4 (strain ATCC BAA-334 / TIGR4) protein is Probable cell division protein WhiA.